Consider the following 1059-residue polypeptide: Carbamoyl phosphate synthase large chain (1059 aa).

Positions 1–401 are carboxyphosphate synthetic domain; that stretch reads MPKRKDIQKI…SLLKACRSLE (401 aa). ATP-binding residues include Arg129, Arg169, Gly175, Gly176, Arg208, Ile210, Glu215, Gly241, Ile242, His243, Gln284, and Glu298. Residues 133–327 form the ATP-grasp 1 domain; the sequence is KQLMEELGQP…IAKLAAKIAV (195 aa). Mg(2+)-binding residues include Gln284, Glu298, and Asn300. Residues Gln284, Glu298, and Asn300 each coordinate Mn(2+). Residues 402–546 form an oligomerization domain region; that stretch reads VGVDHNELPA…YSTYGFENES (145 aa). Positions 547-929 are carbamoyl phosphate synthetic domain; it reads VKSSKESVLV…ALYKAFEASY (383 aa). The 191-residue stretch at 671–861 folds into the ATP-grasp 2 domain; the sequence is EQALKELDIP…MAQVATRLIL (191 aa). ATP is bound by residues Arg707, Ser746, Ile748, Glu752, Gly777, Val778, His779, Ser780, Gln820, and Glu832. The Mg(2+) site is built by Gln820, Glu832, and Asn834. 3 residues coordinate Mn(2+): Gln820, Glu832, and Asn834. One can recognise an MGS-like domain in the interval 930–1059; that stretch reads LHLPNFGNVV…ESRSFTTEAI (130 aa). Positions 930–1059 are allosteric domain; the sequence is LHLPNFGNVV…ESRSFTTEAI (130 aa).

The protein belongs to the CarB family. As to quaternary structure, composed of two chains; the small (or glutamine) chain promotes the hydrolysis of glutamine to ammonia, which is used by the large (or ammonia) chain to synthesize carbamoyl phosphate. Tetramer of heterodimers (alpha,beta)4. Mg(2+) is required as a cofactor. It depends on Mn(2+) as a cofactor.

The enzyme catalyses hydrogencarbonate + L-glutamine + 2 ATP + H2O = carbamoyl phosphate + L-glutamate + 2 ADP + phosphate + 2 H(+). It catalyses the reaction hydrogencarbonate + NH4(+) + 2 ATP = carbamoyl phosphate + 2 ADP + phosphate + 2 H(+). It participates in amino-acid biosynthesis; L-arginine biosynthesis; carbamoyl phosphate from bicarbonate: step 1/1. It functions in the pathway pyrimidine metabolism; UMP biosynthesis via de novo pathway; (S)-dihydroorotate from bicarbonate: step 1/3. Functionally, large subunit of the glutamine-dependent carbamoyl phosphate synthetase (CPSase). CPSase catalyzes the formation of carbamoyl phosphate from the ammonia moiety of glutamine, carbonate, and phosphate donated by ATP, constituting the first step of 2 biosynthetic pathways, one leading to arginine and/or urea and the other to pyrimidine nucleotides. The large subunit (synthetase) binds the substrates ammonia (free or transferred from glutamine from the small subunit), hydrogencarbonate and ATP and carries out an ATP-coupled ligase reaction, activating hydrogencarbonate by forming carboxy phosphate which reacts with ammonia to form carbamoyl phosphate. This Streptococcus gordonii (strain Challis / ATCC 35105 / BCRC 15272 / CH1 / DL1 / V288) protein is Carbamoyl phosphate synthase large chain.